A 92-amino-acid polypeptide reads, in one-letter code: Signal recognition particle 19 kDa protein (92 aa).

The protein belongs to the SRP19 family. As to quaternary structure, part of the signal recognition particle protein translocation system, which is composed of SRP and FtsY. Archaeal SRP consists of a 7S RNA molecule of 300 nucleotides and two protein subunits: SRP54 and SRP19.

Its subcellular location is the cytoplasm. In terms of biological role, involved in targeting and insertion of nascent membrane proteins into the cytoplasmic membrane. Binds directly to 7S RNA and mediates binding of the 54 kDa subunit of the SRP. The polypeptide is Signal recognition particle 19 kDa protein (Halorubrum lacusprofundi (strain ATCC 49239 / DSM 5036 / JCM 8891 / ACAM 34)).